A 76-amino-acid polypeptide reads, in one-letter code: Exodeoxyribonuclease 7 small subunit (76 aa).

The protein belongs to the XseB family. In terms of assembly, heterooligomer composed of large and small subunits.

The protein localises to the cytoplasm. The enzyme catalyses Exonucleolytic cleavage in either 5'- to 3'- or 3'- to 5'-direction to yield nucleoside 5'-phosphates.. In terms of biological role, bidirectionally degrades single-stranded DNA into large acid-insoluble oligonucleotides, which are then degraded further into small acid-soluble oligonucleotides. The polypeptide is Exodeoxyribonuclease 7 small subunit (Geotalea daltonii (strain DSM 22248 / JCM 15807 / FRC-32) (Geobacter daltonii)).